The primary structure comprises 359 residues: Serine/threonine-protein kinase SAPK7 (359 aa).

The region spanning 4-260 is the Protein kinase domain; sequence YELLKDIGAG…IREIRNHPWF (257 aa). Residues 10-18 and Lys-33 each bind ATP; that span reads IGAGNFGVA. Asp-123 serves as the catalytic Proton acceptor. The interval 299-359 is disordered; that stretch reads EEARTPPRSS…VHASGEFQLS (61 aa). The span at 331–343 shows a compositional bias: acidic residues; it reads EEQEEEEDAEDEY.

It belongs to the protein kinase superfamily. Ser/Thr protein kinase family. May be phosphorylated. Weakly expressed in roots. Expressed in roots of young seedlings.

The protein resides in the cytoplasm. It is found in the nucleus. It carries out the reaction L-seryl-[protein] + ATP = O-phospho-L-seryl-[protein] + ADP + H(+). It catalyses the reaction L-threonyl-[protein] + ATP = O-phospho-L-threonyl-[protein] + ADP + H(+). With respect to regulation, activated by hyperosmotic stress. Its function is as follows. May play a role in signal transduction of hyperosmotic response. In Oryza sativa subsp. japonica (Rice), this protein is Serine/threonine-protein kinase SAPK7 (SAPK7).